The following is a 766-amino-acid chain: DENN domain-containing protein 1B (766 aa).

In terms of domain architecture, uDENN spans 14-143 (DLVLKVKCHA…YNHPVPKANT (130 aa)). One can recognise a cDENN domain in the interval 160–296 (GLPTIPESRN…VVSALKNKLK (137 aa)). Residues 298–375 (QSTATGDGVA…DGRLAKLNAG (78 aa)) form the dDENN domain. The short motif at 378–382 (FSDIF) is the FXDXF motif element. The disordered stretch occupies residues 472-523 (NEKGENREKHKLSQTHLKRPHKSLDGTLYDDDDDDDDIERASKISSEDGEET). A compositionally biased stretch (basic residues) spans 480 to 492 (KHKLSQTHLKRPH). Residues 499 to 509 (LYDDDDDDDDI) are compositionally biased toward acidic residues. Position 500 is a phosphotyrosine (tyrosine 500). Phosphoserine occurs at positions 516, 517, 530, and 533. Residues 547 to 556 (DLLGEILDTL) carry the Clathrin box motif. Disordered regions lie at residues 611-634 (LGQDDSALHGRQLPPSPRKRVSSG) and 652-732 (LCAD…KPSK). Phosphoserine occurs at positions 632 and 633. Positions 694–704 (TPGQAPLQSED) are enriched in polar residues. The segment covering 722 to 732 (KAGKEDTKPSK) has biased composition (basic and acidic residues).

In terms of assembly, interacts with RAB35. Interacts with clathrin heavy chain/CLTC. Interacts with components of the adapter protein complex 2 (AP-2) AP2A2 and AP2B1. Interacts with CD3E. Post-translationally, phosphorylated on serine and/or threonine, possibly regulating the guanine nucleotide exchange factor (GEF) activity. Expressed in a subset of dendritic cells (DCs).

It is found in the cytoplasm. The protein resides in the cytosol. Its subcellular location is the cytoplasmic vesicle. It localises to the clathrin-coated vesicle. Guanine nucleotide exchange factor (GEF) for RAB35 that acts as a regulator of T-cell receptor (TCR) internalization in TH2 cells. Acts by promoting the exchange of GDP to GTP, converting inactive GDP-bound RAB35 into its active GTP-bound form. Plays a role in clathrin-mediated endocytosis. Controls cytokine production in TH2 lymphocytes by controlling the rate of TCR internalization and routing to endosomes: acts by mediating clathrin-mediated endocytosis of TCR via its interaction with the adapter protein complex 2 (AP-2) and GEF activity. Dysregulation leads to impaired TCR down-modulation and recycling, affecting cytokine production in TH2 cells. The chain is DENN domain-containing protein 1B from Mus musculus (Mouse).